The sequence spans 316 residues: Ornithine carbamoyltransferase (316 aa).

Carbamoyl phosphate contacts are provided by residues 57 to 60 (STRT), Q84, R108, and 135 to 138 (HPCQ). L-ornithine-binding positions include N166, D230, and 234–235 (SM). Residues 269-270 (CL) and R297 contribute to the carbamoyl phosphate site.

It belongs to the aspartate/ornithine carbamoyltransferase superfamily. OTCase family.

The protein resides in the cytoplasm. The catalysed reaction is carbamoyl phosphate + L-ornithine = L-citrulline + phosphate + H(+). It participates in amino-acid biosynthesis; L-arginine biosynthesis; L-arginine from L-ornithine and carbamoyl phosphate: step 1/3. In terms of biological role, reversibly catalyzes the transfer of the carbamoyl group from carbamoyl phosphate (CP) to the N(epsilon) atom of ornithine (ORN) to produce L-citrulline. The sequence is that of Ornithine carbamoyltransferase from Bacillus thuringiensis subsp. konkukian (strain 97-27).